Here is a 685-residue protein sequence, read N- to C-terminus: Protein hook (685 aa).

Positions 6-122 constitute a Calponin-homology (CH) domain; the sequence is MEIYESLIRW…RLLQLILGCA (117 aa). A coiled-coil region spans residues 134 to 570; it reads QIMELEESLQ…LLAADSRYKK (437 aa). Disordered regions lie at residues 430-449, 593-625, and 661-685; these read AAED…SSDV, LEKP…SGRV, and PGQS…FAKK. The segment covering 602 to 623 has biased composition (low complexity); the sequence is ASSSSATGSGGDASTLTSTGSG. Over residues 661 to 670 the composition is skewed to polar residues; it reads PGQSFLSRQR.

This sequence belongs to the hook family. Homodimer. Interacts with microtubules via its N-terminus.

Its subcellular location is the cytoplasm. It localises to the cytoskeleton. The protein localises to the endosome. Its function is as follows. Involved in endocytic trafficking. Probably acts as a cytoskeletal linker protein that tethers endosome vesicles to the cytoskeleton. The sequence is that of Protein hook from Aedes aegypti (Yellowfever mosquito).